The following is a 1439-amino-acid chain: Histone-lysine N-methyltransferase NSD3 (1439 aa).

The interval proline 121–proline 151 is disordered. Over residues proline 128–valine 139 the composition is skewed to pro residues. The residue at position 150 (serine 150) is a Phosphoserine. Residues lysine 154 to isoleucine 157 carry the KIKL motif. The interval glutamine 181–alanine 247 is disordered. The segment covering lysine 187–asparagine 201 has biased composition (basic residues). The segment covering arginine 202–leucine 244 has biased composition (basic and acidic residues). Residues lysine 218 and lysine 245 each participate in a glycyl lysine isopeptide (Lys-Gly) (interchain with G-Cter in SUMO2) cross-link. Positions valine 270–histidine 333 constitute a PWWP 1 domain. Disordered stretches follow at residues alanine 344–glutamine 367 and glutamate 401–valine 466. Polar residues-rich tracts occupy residues glutamate 401–lysine 413 and valine 425–threonine 445. A Glycyl lysine isopeptide (Lys-Gly) (interchain with G-Cter in SUMO2) cross-link involves residue lysine 413. Serine 457 is subject to Phosphoserine. Glycyl lysine isopeptide (Lys-Gly) (interchain with G-Cter in SUMO2) cross-links involve residues lysine 502 and lysine 532. The segment at glutamine 540–valine 695 is disordered. The segment covering serine 546–serine 568 has biased composition (polar residues). Residues threonine 583–proline 595 are compositionally biased toward basic and acidic residues. 3 positions are modified to phosphoserine: serine 585, serine 587, and serine 590. Lysine 628 is covalently cross-linked (Glycyl lysine isopeptide (Lys-Gly) (interchain with G-Cter in SUMO2)). The segment covering serine 637 to arginine 648 has biased composition (polar residues). Serine 655 bears the Phosphoserine mark. Over residues aspartate 670–serine 691 the composition is skewed to low complexity. 3 consecutive PHD-type zinc fingers follow at residues aspartate 701–glycine 748, glutamine 749–glutamate 805, and valine 862–glycine 955. Lysine 790 is modified (N6-acetyllysine). The PWWP 2 domain occupies tyrosine 960 to glycine 1025. Residues isoleucine 1036 to glutamate 1065 are a coiled coil. One can recognise an AWS domain in the interval serine 1096–leucine 1146. One can recognise an SET domain in the interval proline 1148–asparagine 1265. Residue lysine 1154 forms a Glycyl lysine isopeptide (Lys-Gly) (interchain with G-Cter in SUMO2) linkage. In terms of domain architecture, Post-SET spans glycine 1272–glycine 1288. Residues glutamate 1323–aspartate 1370 form a PHD-type 4; atypical zinc finger.

It belongs to the class V-like SAM-binding methyltransferase superfamily. Histone-lysine methyltransferase family. SET2 subfamily. As to quaternary structure, interacts with BRD4. Interacts (via KIKL motif) with BRD3 (via NET domain).

The protein localises to the nucleus. It is found in the chromosome. It carries out the reaction L-lysyl(4)-[histone H3] + 2 S-adenosyl-L-methionine = N(6),N(6)-dimethyl-L-lysyl(4)-[histone H3] + 2 S-adenosyl-L-homocysteine + 2 H(+). The enzyme catalyses L-lysyl(27)-[histone H3] + 2 S-adenosyl-L-methionine = N(6),N(6)-dimethyl-L-lysyl(27)-[histone H3] + 2 S-adenosyl-L-homocysteine + 2 H(+). Histone methyltransferase. Preferentially dimethylates 'Lys-4' and 'Lys-27' of histone H3 forming H3K4me2 and H3K27me2. H3 'Lys-4' methylation represents a specific tag for epigenetic transcriptional activation, while 'Lys-27' is a mark for transcriptional repression. The polypeptide is Histone-lysine N-methyltransferase NSD3 (Nsd3) (Mus musculus (Mouse)).